Consider the following 144-residue polypeptide: Large ribosomal subunit protein uL16 (144 aa).

The protein belongs to the universal ribosomal protein uL16 family. In terms of assembly, part of the 50S ribosomal subunit.

Its function is as follows. Binds 23S rRNA and is also seen to make contacts with the A and possibly P site tRNAs. In Thermoanaerobacter pseudethanolicus (strain ATCC 33223 / 39E) (Clostridium thermohydrosulfuricum), this protein is Large ribosomal subunit protein uL16.